The chain runs to 318 residues: MPNIVLFSGSSHQDLSQKVAERLGLELGKVVTKKFSNQETSVEIGESVRGEDVYIIQSGCGEINDNLMELLIMINACKIASSSRVTAVIPCFPYARQDKKDKSRAPISAKLVANMLSVAGADHIITMDLHASQIQGFFDIPVDNLYAEPAVLQWIRENIPEWKNSSIVSPDAGGAKRVTSIADRLNVEFALIHKERKKANEVDRMVLVGDVKDRVAILVDDMADTCGTVCHAADKLLSAGATKVYAILTHGIFSGPAISRINNAAFEAVVVTNTIPQDEKMKQCSKIQVIDISMILAEAIRRTHNGESVSYLFSHVPL.

96–101 (RQDKKD) lines the ATP pocket. The Mg(2+) site is built by aspartate 128, histidine 130, aspartate 139, and aspartate 143. Histidine 130 contributes to the ATP binding site. Residues 212–227 (KDRVAILVDDMADTCG) form a binding of phosphoribosylpyrophosphate region.

The protein belongs to the ribose-phosphate pyrophosphokinase family. Homodimer. The active form is probably a hexamer composed of 3 homodimers. Requires Mg(2+) as cofactor.

It carries out the reaction D-ribose 5-phosphate + ATP = 5-phospho-alpha-D-ribose 1-diphosphate + AMP + H(+). Its pathway is metabolic intermediate biosynthesis; 5-phospho-alpha-D-ribose 1-diphosphate biosynthesis; 5-phospho-alpha-D-ribose 1-diphosphate from D-ribose 5-phosphate (route I): step 1/1. Its activity is regulated as follows. Activated by magnesium and inorganic phosphate. Competitively or non-competitively inhibited by ADP, 2,3-bisphosphoglyceride or GDP. Its function is as follows. Catalyzes the synthesis of phosphoribosylpyrophosphate (PRPP) that is essential for nucleotide synthesis. The polypeptide is Ribose-phosphate pyrophosphokinase 2 (prps2) (Xenopus laevis (African clawed frog)).